The sequence spans 121 residues: Large ribosomal subunit protein bL12 (121 aa).

It belongs to the bacterial ribosomal protein bL12 family. In terms of assembly, homodimer. Part of the ribosomal stalk of the 50S ribosomal subunit. Forms a multimeric L10(L12)X complex, where L10 forms an elongated spine to which 2 to 4 L12 dimers bind in a sequential fashion. Binds GTP-bound translation factors.

Functionally, forms part of the ribosomal stalk which helps the ribosome interact with GTP-bound translation factors. Is thus essential for accurate translation. This Pseudomonas syringae pv. tomato (strain ATCC BAA-871 / DC3000) protein is Large ribosomal subunit protein bL12.